The primary structure comprises 302 residues: Sulfate adenylyltransferase subunit 2 (302 aa).

Positions 280–302 (RQGRAIDHDQSGSMELKKRQGYF) are disordered.

The protein belongs to the PAPS reductase family. CysD subfamily. In terms of assembly, heterodimer composed of CysD, the smaller subunit, and CysN.

It carries out the reaction sulfate + ATP + H(+) = adenosine 5'-phosphosulfate + diphosphate. It functions in the pathway sulfur metabolism; hydrogen sulfide biosynthesis; sulfite from sulfate: step 1/3. Functionally, with CysN forms the ATP sulfurylase (ATPS) that catalyzes the adenylation of sulfate producing adenosine 5'-phosphosulfate (APS) and diphosphate, the first enzymatic step in sulfur assimilation pathway. APS synthesis involves the formation of a high-energy phosphoric-sulfuric acid anhydride bond driven by GTP hydrolysis by CysN coupled to ATP hydrolysis by CysD. The polypeptide is Sulfate adenylyltransferase subunit 2 (Vibrio cholerae serotype O1 (strain ATCC 39541 / Classical Ogawa 395 / O395)).